The chain runs to 502 residues: Lysine--tRNA ligase (502 aa).

E398 and E405 together coordinate Mg(2+).

Belongs to the class-II aminoacyl-tRNA synthetase family. As to quaternary structure, homodimer. It depends on Mg(2+) as a cofactor.

It is found in the cytoplasm. The enzyme catalyses tRNA(Lys) + L-lysine + ATP = L-lysyl-tRNA(Lys) + AMP + diphosphate. This is Lysine--tRNA ligase from Thermotoga sp. (strain RQ2).